Consider the following 199-residue polypeptide: Peroxynitrite isomerase (199 aa).

The GXWXGXG motif lies at 21–27 (GEWEGRG). Heme b is bound at residue histidine 190.

It belongs to the nitrobindin family. In terms of assembly, homodimer. Heme b is required as a cofactor.

It carries out the reaction peroxynitrite = nitrate. Its pathway is nitrogen metabolism. Heme-binding protein able to scavenge peroxynitrite and to protect free L-tyrosine against peroxynitrite-mediated nitration, by acting as a peroxynitrite isomerase that converts peroxynitrite to nitrate. Therefore, this protein likely plays a role in peroxynitrite sensing and in the detoxification of reactive nitrogen and oxygen species (RNS and ROS, respectively). Is able to bind nitric oxide (NO) in vitro, but may act as a sensor of peroxynitrite levels in vivo. This chain is Peroxynitrite isomerase, found in Paenarthrobacter aurescens (strain TC1).